A 389-amino-acid polypeptide reads, in one-letter code: MPLPTSQLRLAMVAGEPSGDLLGASLLGGLRERLPESAQYYGIGGQRMIAQGFDSHWQMDKLTVRGYVEALGQIPEILRIRGELKRQLLAERPDAFIGVDAPDFNFNVEQAARDAGIPSIHFVCPSIWAWRGGRIKKIAKSVDHMLCLFPFEPAILDKAGVASTYVGHPLADEIPLEPDTHGARIALGLPADGPVIAVLPGSRRSEIALIGPTFFAAMALMQQREPGVRFVMPAATPALRALLQPLVDAHPKLALTITDGRSQVAMTAADAILVKSGTVTLEAALLKKPMVISYKVPWLTGQIMRRQGYLPYVGLPNILAGRFVVPELLQHFATPEALADATLTQLRDDANRRTLTEIFTEMHLSLRQNTAAKAAEAVVRVLEQRKGRA.

This sequence belongs to the LpxB family.

It catalyses the reaction a lipid X + a UDP-2-N,3-O-bis[(3R)-3-hydroxyacyl]-alpha-D-glucosamine = a lipid A disaccharide + UDP + H(+). Its pathway is bacterial outer membrane biogenesis; LPS lipid A biosynthesis. Its function is as follows. Condensation of UDP-2,3-diacylglucosamine and 2,3-diacylglucosamine-1-phosphate to form lipid A disaccharide, a precursor of lipid A, a phosphorylated glycolipid that anchors the lipopolysaccharide to the outer membrane of the cell. This chain is Lipid-A-disaccharide synthase, found in Burkholderia lata (strain ATCC 17760 / DSM 23089 / LMG 22485 / NCIMB 9086 / R18194 / 383).